Here is a 75-residue protein sequence, read N- to C-terminus: UPF0235 protein Mflv_3569 (75 aa).

It belongs to the UPF0235 family.

The protein is UPF0235 protein Mflv_3569 of Mycolicibacterium gilvum (strain PYR-GCK) (Mycobacterium gilvum (strain PYR-GCK)).